The sequence spans 506 residues: Histidine ammonia-lyase (506 aa).

The segment at residues alanine 143 to glycine 145 is a cross-link (5-imidazolinone (Ala-Gly)). The residue at position 144 (serine 144) is a 2,3-didehydroalanine (Ser).

The protein belongs to the PAL/histidase family. Contains an active site 4-methylidene-imidazol-5-one (MIO), which is formed autocatalytically by cyclization and dehydration of residues Ala-Ser-Gly.

It is found in the cytoplasm. It carries out the reaction L-histidine = trans-urocanate + NH4(+). It functions in the pathway amino-acid degradation; L-histidine degradation into L-glutamate; N-formimidoyl-L-glutamate from L-histidine: step 1/3. The protein is Histidine ammonia-lyase of Salmonella choleraesuis (strain SC-B67).